The primary structure comprises 431 residues: UDP-N-acetylmuramate--L-alanine ligase (431 aa).

108–114 is an ATP binding site; it reads GAHGKST.

Belongs to the MurCDEF family.

It localises to the cytoplasm. The catalysed reaction is UDP-N-acetyl-alpha-D-muramate + L-alanine + ATP = UDP-N-acetyl-alpha-D-muramoyl-L-alanine + ADP + phosphate + H(+). It functions in the pathway cell wall biogenesis; peptidoglycan biosynthesis. Functionally, cell wall formation. The chain is UDP-N-acetylmuramate--L-alanine ligase from Campylobacter jejuni (strain RM1221).